A 493-amino-acid polypeptide reads, in one-letter code: Angiopoietin-related protein 2 (493 aa).

A signal peptide spans 1-22; that stretch reads MRPLCVTCWWLGLLAAMGAVAG. Coiled-coil stretches lie at residues 76-115 and 152-206; these read PEVL…VDGG and ALEL…HCQR. 2 N-linked (GlcNAc...) asparagine glycosylation sites follow: Asn164 and Asn192. The Fibrinogen C-terminal domain maps to 269–489; it reads DKPSGPWRDC…KVVMMIRPNP (221 aa). Intrachain disulfides connect Cys278–Cys307 and Cys430–Cys443.

N-glycosylated. As to expression, widely expressed in heart, small intestine, spleen and stomach. Also found in lower levels in colon, ovary, adrenal gland, skeletal muscle and in prostate.

It localises to the secreted. Its function is as follows. Induces sprouting in endothelial cells through an autocrine and paracrine action. This Homo sapiens (Human) protein is Angiopoietin-related protein 2 (ANGPTL2).